Reading from the N-terminus, the 311-residue chain is Protoheme IX farnesyltransferase (311 aa).

9 helical membrane passes run 32–52, 53–73, 104–124, 125–145, 153–173, 180–200, 224–244, 245–265, and 290–310; these read VMSL…VSIN, PWYG…AGVL, FVFG…FINW, FAAL…TIWL, IVIG…AATG, FLLF…LSLF, KQIL…FIID, FAGI…IYFA, and FYLA…YFII.

This sequence belongs to the UbiA prenyltransferase family. Protoheme IX farnesyltransferase subfamily.

The protein resides in the cell inner membrane. The catalysed reaction is heme b + (2E,6E)-farnesyl diphosphate + H2O = Fe(II)-heme o + diphosphate. It participates in porphyrin-containing compound metabolism; heme O biosynthesis; heme O from protoheme: step 1/1. Functionally, converts heme B (protoheme IX) to heme O by substitution of the vinyl group on carbon 2 of heme B porphyrin ring with a hydroxyethyl farnesyl side group. This is Protoheme IX farnesyltransferase from Bartonella quintana (strain Toulouse) (Rochalimaea quintana).